The chain runs to 719 residues: Ferric reductase transmembrane component 4 (719 aa).

The N-terminal stretch at 1 to 18 (MLLVHIISFLLFFQLSAA) is a signal peptide. Topologically, residues 19–156 (KAPPSKTSLI…YGYYYNHDIP (138 aa)) are extracellular. Asn51, Asn80, Asn101, Asn113, Asn127, and Asn135 each carry an N-linked (GlcNAc...) asparagine glycan. A helical transmembrane segment spans residues 157–177 (YYFGGIICAYFVGVMLLAGLI). The Cytoplasmic segment spans residues 178–228 (RFLNYTPIKKIMFQQKLVNYVRGYTTLPTLYEKHAEPFSYLKVITGYLPTR). A helical membrane pass occupies residues 229 to 249 (FETLVILGYLILHTIFMAYKY). The Extracellular segment spans residues 250-267 (QYDPYHIIFAAHRAEVAH). Residues 268-288 (FVAYRSGILSFAHLPLIVLFA) form a helical membrane-spanning segment. Residues 273-407 (SGILSFAHLP…SGIEWIYAAI (135 aa)) enclose the Ferric oxidoreductase domain. Topologically, residues 289-304 (GRNNFLQLISGLKHTS) are cytoplasmic. Residues 305–325 (FIVFHKWLGRMMFLDAIIHAA) form a helical membrane-spanning segment. His309 and His323 together coordinate heme. Residues 326-346 (GFTNYYLYYKKWNTVRLRVYW) lie on the Extracellular side of the membrane. Residues 347 to 367 (KFGIATTCLAGMLIFFSIAAF) form a helical membrane-spanning segment. The Cytoplasmic portion of the chain corresponds to 368-373 (RRHYYE). The helical transmembrane segment at 374–394 (TFMALHIVFAALFLYTCWEHV) threads the bilayer. His379 and His393 together coordinate heme. Thr395 is a topological domain (extracellular). A helical membrane pass occupies residues 396 to 416 (NFSGIEWIYAAIAIWGVDRIV). Residues 408 to 527 (AIWGVDRIVR…EGPYGSKSTA (120 aa)) enclose the FAD-binding FR-type domain. The Cytoplasmic portion of the chain corresponds to 417-719 (RITRIALLGF…IEYLEEYQAW (303 aa)). 472–478 (HPFTVMD) is a binding site for FAD. 519-522 (GPYG) lines the NADP(+) pocket. 2 stretches are compositionally biased toward polar residues: residues 606-618 (EKISSNEVKNGET) and 625-643 (SSLSNSEKAPSESENTELP). The tract at residues 606 to 643 (EKISSNEVKNGETTAEKAPSSLSNSEKAPSESENTELP) is disordered. 685-686 (CG) contacts NADP(+).

Belongs to the ferric reductase (FRE) family. Requires FAD as cofactor.

The protein resides in the cell membrane. It carries out the reaction 2 a Fe(II)-siderophore + NADP(+) + H(+) = 2 a Fe(III)-siderophore + NADPH. In terms of biological role, siderophore-iron reductase responsible for reducing extracellular iron prior to import. Catalyzes the reductive uptake of Fe(3+) bound to dihydroxamate rhodotorulic acid. Fe(3+) is reduced to Fe(2+), which then dissociates from the siderophore and can be imported by the high-affinity Fe(2+) transport complex in the plasma membrane. The chain is Ferric reductase transmembrane component 4 (FRE4) from Saccharomyces cerevisiae (strain ATCC 204508 / S288c) (Baker's yeast).